A 193-amino-acid polypeptide reads, in one-letter code: ATP-dependent Clp protease proteolytic subunit 1 (193 aa).

The active-site Nucleophile is the Ser99. His124 is an active-site residue.

The protein belongs to the peptidase S14 family. Fourteen ClpP subunits assemble into 2 heptameric rings which stack back to back to give a disk-like structure with a central cavity, resembling the structure of eukaryotic proteasomes.

The protein localises to the cytoplasm. It carries out the reaction Hydrolysis of proteins to small peptides in the presence of ATP and magnesium. alpha-casein is the usual test substrate. In the absence of ATP, only oligopeptides shorter than five residues are hydrolyzed (such as succinyl-Leu-Tyr-|-NHMec, and Leu-Tyr-Leu-|-Tyr-Trp, in which cleavage of the -Tyr-|-Leu- and -Tyr-|-Trp bonds also occurs).. Cleaves peptides in various proteins in a process that requires ATP hydrolysis. Has a chymotrypsin-like activity. Plays a major role in the degradation of misfolded proteins. This chain is ATP-dependent Clp protease proteolytic subunit 1, found in Shouchella clausii (strain KSM-K16) (Alkalihalobacillus clausii).